The following is a 450-amino-acid chain: Protein tweety homolog 1 (450 aa).

Topologically, residues 1–43 are extracellular; sequence MGAPPGYRPSAWVHLLHQLPRADFQLRPVPSVFAPQEQEYQQA. The chain crosses the membrane as a helical span at residues 44 to 64; the sequence is LLLVAALAGLGLGLSLIFIAV. At 65–88 the chain is on the cytoplasmic side; that stretch reads YLIRFCCCRPPEPPGSKIPSPGGG. The chain crosses the membrane as a helical span at residues 89–109; it reads CVTWSCIVALLAGCTGIGIGF. Over 110-214 the chain is Extracellular; sequence YGNSETSDGV…NVSFVEEYRW (105 aa). Residues Asn-130 and Asn-205 are each glycosylated (N-linked (GlcNAc...) asparagine). Residues 215 to 235 form a helical membrane-spanning segment; that stretch reads LAYVLLLLLELLVCLFTLLGL. Over 236 to 240 the chain is Cytoplasmic; that stretch reads AKQSK. Residues 241-261 form a helical membrane-spanning segment; it reads WLVIVMTVMSLLVLVLSWGSM. Residues 262–390 are Extracellular-facing; the sequence is GLEAATAVGL…LRGLCEDALE (129 aa). Cystine bridges form between Cys-275/Cys-385 and Cys-303/Cys-370. N-linked (GlcNAc...) asparagine glycans are attached at residues Asn-284 and Asn-355. The chain crosses the membrane as a helical span at residues 391-411; it reads GLLFLLLFSLLSAGALATALC. Residues 412 to 450 lie on the Cytoplasmic side of the membrane; the sequence is SLPRAWALFPPSDDYDDTDDDDPFNPQESKRFVQWQSSI. Positions 428–450 are disordered; sequence DTDDDDPFNPQESKRFVQWQSSI. Residue Ser-440 is modified to Phosphoserine.

It belongs to the tweety family. As to quaternary structure, homotetramer; disulfide-linked. Homodimer. In terms of processing, N-glycosylated. Contains high-mannose, hybrid and complex oligosaccharides. In terms of tissue distribution, expressed in brain, eye, ovary and testis, and at lower levels in muscle, placenta, liver and lung.

Its subcellular location is the cell membrane. It catalyses the reaction chloride(in) = chloride(out). It carries out the reaction L-glutamate(out) = L-glutamate(in). Functionally, calcium-independent, swelling-dependent volume-regulated anion channel (VRAC-swell) which plays a pivotal role in the process of regulatory volume decrease (RVD) in the brain through the efflux of anions like chloride and organic osmolytes like glutamate. Ca(2+)-independent, swelling-activated chloride channel, possibly involved in regulation of cell volume. This Homo sapiens (Human) protein is Protein tweety homolog 1 (TTYH1).